A 412-amino-acid chain; its full sequence is Serine hydroxymethyltransferase (412 aa).

Residues L117 and G121 to L123 each bind (6S)-5,6,7,8-tetrahydrofolate. N6-(pyridoxal phosphate)lysine is present on K226.

It belongs to the SHMT family. In terms of assembly, homodimer. Pyridoxal 5'-phosphate is required as a cofactor.

Its subcellular location is the cytoplasm. It carries out the reaction (6R)-5,10-methylene-5,6,7,8-tetrahydrofolate + glycine + H2O = (6S)-5,6,7,8-tetrahydrofolate + L-serine. It functions in the pathway one-carbon metabolism; tetrahydrofolate interconversion. The protein operates within amino-acid biosynthesis; glycine biosynthesis; glycine from L-serine: step 1/1. Catalyzes the reversible interconversion of serine and glycine with tetrahydrofolate (THF) serving as the one-carbon carrier. This reaction serves as the major source of one-carbon groups required for the biosynthesis of purines, thymidylate, methionine, and other important biomolecules. Also exhibits THF-independent aldolase activity toward beta-hydroxyamino acids, producing glycine and aldehydes, via a retro-aldol mechanism. This is Serine hydroxymethyltransferase from Symbiobacterium thermophilum (strain DSM 24528 / JCM 14929 / IAM 14863 / T).